The following is a 591-amino-acid chain: V-type ATP synthase alpha chain (591 aa).

233-240 serves as a coordination point for ATP; sequence GPFGAGKT.

Belongs to the ATPase alpha/beta chains family.

It catalyses the reaction ATP + H2O + 4 H(+)(in) = ADP + phosphate + 5 H(+)(out). Functionally, produces ATP from ADP in the presence of a proton gradient across the membrane. The V-type alpha chain is a catalytic subunit. The protein is V-type ATP synthase alpha chain of Streptococcus pneumoniae serotype 19F (strain G54).